The sequence spans 1172 residues: MSRGSIEIPLRDTDEVIELDFDQLPEGDEVISILKQEHTQLHIWIALGLEYYKQVKTEDFVKLLEAARIDGNLDYRDHEKDQMTCLDTLAAYYVQQARKEKNKDNKKELITQATLLYTMADKIIMYDQNHLLGRACFCLLEGDKMDQADAQFHFVLNQSPNNIPALLGKACISFNKKDYRGALAYYKKALRTNPGCPAGVRLGMGHCFVKLNKLDKARLAFGRALDLNPTCVGALVGLAVLELNNKEADSIKNGVQLLSKAYTIDPSNPMVLNHLANHFFFKKDYSKVQHLALHAFHNTEVEAMQAESCYQLARSFHVQEDYDQAFQYYYQATQFAAASFVLPFFGLGQMYIYRGDKENASQCFEKVLKAYPNNYETMKILGSLYAASDDQEKRDIAKSHLKKVTEQYPDDVEAWIELAQILEQTDIQNALSAYGTATRILQEKVQADVPPEILNNVGALHFRLGNLGEAKKYFLASLDRAKAEAEHDEHYYNAISVTTTYNLARLYEGLCEFHESEKLYKNILREHPNYVDCYLRLGAMARDKGNFYEASDWFKEALQINQDHPDAWSLIGNLHLAKQEWGPGQKKFERILKQPSTQNDTYSMLALGNVWLQTLHQPTRDREKEKRHQDRALAIYKQVLRNDSKNLYAANGIGAVLAHKGYVREARDVFAQVREATADISDVWLNLAHIYVEQKQYISAVQMYENCLRKFYKHQNTEVLLYLARALFKCGKLQECKQILLKARHVAPNDTVLMFNVALVLQRLATLVLKDEKSNLKAVLNAVKELELAHRYFNYLSKVGDKMRFDLALAASEARQCSDLLSQAQYHVARARKQDEEEKELRAKQEQEKEILRQKLIKEQEEKRLKEIEEQKKLLEQRAQYVEKTRNLLNFTGEMETPKEKKQRGGGGGGGGRRSKKNGEFDEFVNDDSDEDLAPRKKKRKKGGGSSGSGGEQGEGGEEGEGGEKKKKKRRKRPQKGGDGSDDDEDQAPQPKKRQPKKREKPAKFERTPPSMKGKIKSKAIISSSEDDSDEDKLKIADEGHGRGSNSDSDEGPRTQAKKRIMSDSDSDNANKSGSGAGSPQKSPQSDGDSDNNAWARKRRRQDSGSDNDSAQSRRSSGGSDNESRAASRSPESQRGSDRGSDNEGSARASPNESEQEASNNEKSDRGSDDSD.

TPR repeat units follow at residues 41–75 (LHIWIALGLEYYKQVKTEDFVKLLEAARIDGNLDY), 129–162 (NHLLGRACFCLLEGDKMDQADAQFHFVLNQSPNN), 163–196 (IPALLGKACISFNKKDYRGALAYYKKALRTNPGC), 198–231 (AGVRLGMGHCFVKLNKLDKARLAFGRALDLNPTC), 235–268 (LVGLAVLELNNKEADSIKNGVQLLSKAYTIDPSN), 306–339 (AESCYQLARSFHVQEDYDQAFQYYYQATQFAAAS), 341–374 (VLPFFGLGQMYIYRGDKENASQCFEKVLKAYPNN), 412–444 (VEAWIELAQILEQTDIQNALSAYGTATRILQEK), 451–484 (PEILNNVGALHFRLGNLGEAKKYFLASLDRAKAE), 497–530 (VTTTYNLARLYEGLCEFHESEKLYKNILREHPNY), 531–564 (VDCYLRLGAMARDKGNFYEASDWFKEALQINQDH), 566–598 (DAWSLIGNLHLAKQEWGPGQKKFERILKQPSTQ), 613–646 (QTLHQPTRDREKEKRHQDRALAIYKQVLRNDSKN), 648–680 (YAANGIGAVLAHKGYVREARDVFAQVREATADI), 681–714 (SDVWLNLAHIYVEQKQYISAVQMYENCLRKFYKH), and 717–750 (TEVLLYLARALFKCGKLQECKQILLKARHVAPND). Positions 889–1172 (LNFTGEMETP…KSDRGSDDSD (284 aa)) are disordered. The segment covering 921–932 (FDEFVNDDSDED) has biased composition (acidic residues). A compositionally biased stretch (gly residues) spans 944–954 (GGSSGSGGEQG). Basic residues-rich tracts occupy residues 965-975 (KKKKKRRKRPQ) and 991-1001 (PKKRQPKKREK). Basic and acidic residues predominate over residues 1032–1042 (DKLKIADEGHG). Polar residues-rich tracts occupy residues 1068–1093 (DNANKSGSGAGSPQKSPQSDGDSDNN), 1105–1134 (GSDNDSAQSRRSSGGSDNESRAASRSPESQ), and 1149–1159 (ASPNESEQEAS). The span at 1160–1172 (NNEKSDRGSDDSD) shows a compositional bias: basic and acidic residues.

Component of the PAF1 complex, which at least consists of cdc73, paf1, leo1, ctr9 and rtf1. The PAF1 complex interacts with PHF5A.

It is found in the nucleus speckle. In terms of biological role, component of the PAF1 complex (PAF1C) which has multiple functions during transcription by RNA polymerase II. PAF1C associates with RNA polymerase II, is involved in transcriptional elongation and in histone modifications including methylation on histone H3 'Lys-4' (H3K4me3). This chain is RNA polymerase-associated protein CTR9 homolog (ctr9), found in Xenopus tropicalis (Western clawed frog).